We begin with the raw amino-acid sequence, 547 residues long: Chaperonin GroEL (547 aa).

ATP contacts are provided by residues Thr-30 to Pro-33, Lys-51, Asp-87 to Thr-91, Gly-415, and Asp-495. A disordered region spans residues Lys-526–Phe-547. Gly residues predominate over residues Gly-536 to Phe-547.

This sequence belongs to the chaperonin (HSP60) family. In terms of assembly, forms a cylinder of 14 subunits composed of two heptameric rings stacked back-to-back. Interacts with the co-chaperonin GroES.

The protein localises to the cytoplasm. The catalysed reaction is ATP + H2O + a folded polypeptide = ADP + phosphate + an unfolded polypeptide.. Its function is as follows. Together with its co-chaperonin GroES, plays an essential role in assisting protein folding. The GroEL-GroES system forms a nano-cage that allows encapsulation of the non-native substrate proteins and provides a physical environment optimized to promote and accelerate protein folding. The protein is Chaperonin GroEL of Bartonella henselae (strain ATCC 49882 / DSM 28221 / CCUG 30454 / Houston 1) (Rochalimaea henselae).